We begin with the raw amino-acid sequence, 261 residues long: MTCWLRGVTATFGRPAEWPGYLSHLCGRSAAMDLGPMRKSYRGDREAFEETHLTSLDPVKQFAAWFEEAVQCPDIGEANAMCLATCTRDGKPSARMLLLKGFGKDGFRFFTNFESRKGKELDSNPFASLVFYWEPLNRQVRVEGPVKKLPEEEAECYFHSRPKSSQIGAVVSHQSSVIPDREYLRKKNEELEQLYQDQEVPKPKSWGGYVLYPQVMEFWQGQTNRLHDRIVFRRGLPTGDSPLGPMTHRGEEDWLYERLAP.

42–45 serves as a coordination point for pyridoxal 5'-phosphate; sequence RGDR. 95–98 is a binding site for FMN; that stretch reads RMLL. Lys-100 serves as a coordination point for pyridoxal 5'-phosphate. Residues 110–111, 116–117, and Gln-139 each bind FMN; these read FT and RK. 3 residues coordinate pyridoxal 5'-phosphate: Tyr-157, Arg-161, and Ser-165. Residues 174-175 and Trp-219 each bind FMN; that span reads QS. 225–227 contributes to the pyridoxal 5'-phosphate binding site; it reads RLH. An FMN-binding site is contributed by Arg-229. Phosphothreonine is present on Thr-238. Ser-241 is modified (phosphoserine).

The protein belongs to the pyridoxamine 5'-phosphate oxidase family. In terms of assembly, homodimer. FMN is required as a cofactor. As to expression, ubiquitous. Expressed in liver, brain, lung, prostate and stomach (at protein level).

It carries out the reaction pyridoxine 5'-phosphate + O2 = pyridoxal 5'-phosphate + H2O2. The enzyme catalyses pyridoxamine 5'-phosphate + O2 + H2O = pyridoxal 5'-phosphate + H2O2 + NH4(+). Its pathway is cofactor metabolism; pyridoxal 5'-phosphate salvage; pyridoxal 5'-phosphate from pyridoxamine 5'-phosphate: step 1/1. It functions in the pathway cofactor metabolism; pyridoxal 5'-phosphate salvage; pyridoxal 5'-phosphate from pyridoxine 5'-phosphate: step 1/1. Its function is as follows. Catalyzes the oxidation of either pyridoxine 5'-phosphate (PNP) or pyridoxamine 5'-phosphate (PMP) into pyridoxal 5'-phosphate (PLP). The chain is Pyridoxine-5'-phosphate oxidase (PNPO) from Homo sapiens (Human).